Here is a 310-residue protein sequence, read N- to C-terminus: p-hydroxybenzoic acid efflux pump subunit AaeA (310 aa).

The chain crosses the membrane as a helical span at residues 12–32; it reads AITLVLVILAFIAIFRAWVYY.

The protein belongs to the membrane fusion protein (MFP) (TC 8.A.1) family.

It is found in the cell inner membrane. In terms of biological role, forms an efflux pump with AaeB. The protein is p-hydroxybenzoic acid efflux pump subunit AaeA of Salmonella schwarzengrund (strain CVM19633).